The primary structure comprises 304 residues: Zinc carboxypeptidase (304 aa).

The Peptidase M14 domain maps to 1-294 (QYHTLPEIYS…DSVVTILKES (294 aa)). H58 and E61 together coordinate Zn(2+). A disulfide bond links C125 and C148. Residue H184 coordinates Zn(2+). E259 (proton donor/acceptor) is an active-site residue.

Belongs to the peptidase M14 family. Requires Zn(2+) as cofactor. In terms of tissue distribution, gut specific.

It localises to the secreted. Involved in the digestion of the blood meal. In Simulium vittatum (Striped black fly), this protein is Zinc carboxypeptidase.